Consider the following 181-residue polypeptide: Large ribosomal subunit protein uL5 (181 aa).

The protein belongs to the universal ribosomal protein uL5 family. As to quaternary structure, part of the 50S ribosomal subunit; part of the 5S rRNA/L5/L18/L25 subcomplex. Contacts the 5S rRNA and the P site tRNA. Forms a bridge to the 30S subunit in the 70S ribosome.

This is one of the proteins that bind and probably mediate the attachment of the 5S RNA into the large ribosomal subunit, where it forms part of the central protuberance. In the 70S ribosome it contacts protein S13 of the 30S subunit (bridge B1b), connecting the 2 subunits; this bridge is implicated in subunit movement. Contacts the P site tRNA; the 5S rRNA and some of its associated proteins might help stabilize positioning of ribosome-bound tRNAs. The polypeptide is Large ribosomal subunit protein uL5 (Desulforamulus reducens (strain ATCC BAA-1160 / DSM 100696 / MI-1) (Desulfotomaculum reducens)).